The chain runs to 168 residues: Large ribosomal subunit protein bL17 (168 aa).

Residues 121–146 are compositionally biased toward basic and acidic residues; that stretch reads AEAEGGEEKAEQKTEKKAAKAKEPKA. The interval 121–168 is disordered; it reads AEAEGGEEKAEQKTEKKAAKAKEPKAAKAPKKAAAKPKAKAEKKGAEE. Over residues 148–158 the composition is skewed to basic residues; it reads KAPKKAAAKPK. Residues 159-168 show a composition bias toward basic and acidic residues; that stretch reads AKAEKKGAEE.

It belongs to the bacterial ribosomal protein bL17 family. Part of the 50S ribosomal subunit. Contacts protein L32.

This Anaeromyxobacter sp. (strain Fw109-5) protein is Large ribosomal subunit protein bL17.